A 391-amino-acid chain; its full sequence is Chalcone synthase (391 aa).

Residue Cys164 is part of the active site.

The protein belongs to the thiolase-like superfamily. Chalcone/stilbene synthases family.

It carries out the reaction (E)-4-coumaroyl-CoA + 3 malonyl-CoA + 3 H(+) = 2',4,4',6'-tetrahydroxychalcone + 3 CO2 + 4 CoA. Its pathway is secondary metabolite biosynthesis; flavonoid biosynthesis. Its function is as follows. The primary product of this enzyme is 4,2',4',6'-tetrahydroxychalcone (also termed naringenin-chalcone or chalcone) which can under specific conditions spontaneously isomerize into naringenin. This Dianthus monspessulanus protein is Chalcone synthase (CHS).